Reading from the N-terminus, the 220-residue chain is 7-cyano-7-deazaguanine synthase (220 aa).

ATP is bound at residue 7–17 (LSGGLDSAVCL). Zn(2+) contacts are provided by cysteine 191, cysteine 199, cysteine 202, and cysteine 205.

The protein belongs to the QueC family. As to quaternary structure, homodimer. It depends on Zn(2+) as a cofactor.

It carries out the reaction 7-carboxy-7-deazaguanine + NH4(+) + ATP = 7-cyano-7-deazaguanine + ADP + phosphate + H2O + H(+). Its pathway is purine metabolism; 7-cyano-7-deazaguanine biosynthesis. Catalyzes the ATP-dependent conversion of 7-carboxy-7-deazaguanine (CDG) to 7-cyano-7-deazaguanine (preQ(0)). In Desulforudis audaxviator (strain MP104C), this protein is 7-cyano-7-deazaguanine synthase.